We begin with the raw amino-acid sequence, 296 residues long: Homoserine kinase (296 aa).

84 to 94 (PLARGLGSSSS) provides a ligand contact to ATP.

It belongs to the GHMP kinase family. Homoserine kinase subfamily.

It localises to the cytoplasm. It catalyses the reaction L-homoserine + ATP = O-phospho-L-homoserine + ADP + H(+). Its pathway is amino-acid biosynthesis; L-threonine biosynthesis; L-threonine from L-aspartate: step 4/5. Catalyzes the ATP-dependent phosphorylation of L-homoserine to L-homoserine phosphate. The chain is Homoserine kinase from Lactococcus lactis subsp. cremoris (strain SK11).